Here is a 143-residue protein sequence, read N- to C-terminus: Transcription antitermination protein NusB (143 aa).

It belongs to the NusB family.

Functionally, involved in transcription antitermination. Required for transcription of ribosomal RNA (rRNA) genes. Binds specifically to the boxA antiterminator sequence of the ribosomal RNA (rrn) operons. The sequence is that of Transcription antitermination protein NusB from Desulforamulus reducens (strain ATCC BAA-1160 / DSM 100696 / MI-1) (Desulfotomaculum reducens).